A 391-amino-acid chain; its full sequence is Lipid-A-disaccharide synthase (391 aa).

This sequence belongs to the LpxB family.

The catalysed reaction is a lipid X + a UDP-2-N,3-O-bis[(3R)-3-hydroxyacyl]-alpha-D-glucosamine = a lipid A disaccharide + UDP + H(+). It functions in the pathway bacterial outer membrane biogenesis; LPS lipid A biosynthesis. In terms of biological role, condensation of UDP-2,3-diacylglucosamine and 2,3-diacylglucosamine-1-phosphate to form lipid A disaccharide, a precursor of lipid A, a phosphorylated glycolipid that anchors the lipopolysaccharide to the outer membrane of the cell. This chain is Lipid-A-disaccharide synthase, found in Rickettsia akari (strain Hartford).